Reading from the N-terminus, the 491-residue chain is F-box/LRR-repeat protein 7 (491 aa).

The interval 1–79 (MGANNGKQYG…GRGSSTSSSS (79 aa)) is disordered. Residues 10–26 (GSEGKGSSSISSDVSSS) show a composition bias toward low complexity. Polar residues predominate over residues 27–55 (TDHTPTKAQKNVATSEDSDLSMRTLSTPS). Residues 111–157 (QASIDRLPDHSMVQIFSFLPTNQLCRCARVCRRWYNLAWDPRLWRTI) enclose the F-box domain. LRR repeat units lie at residues 170–195 (LKVLTRRLCQDTPNVCLMLETVTVSG), 196–221 (CRRLTDRGLYTIAQCCPELRRLEVSG), 222–247 (CYNISNEAVFDVVSLCPNLEHLDVSG), 253–281 (CISLTREASIKLSPLHGKQISIRYLDMTD), 282–307 (CFVLEDEGLHTIAAHCTQLTHLYLRR), 308–333 (CVRLTDEGLRYLVIYCASIKELSVSD), 334–359 (CRFVSDFGLREIAKLESRLRYLSIAH), 360–385 (CGRVTDVGIRYVAKYCSKLRYLNARG), 386–411 (CEGITDHGVEYLAKNCTKLKSLDIGK), 412–437 (CPLVSDTGLECLALNCFNLKRLSLKS), and 438–463 (CESITGQGLQIVAANCFDLQTLNVQD).

The protein belongs to the FBXL7 family. Part of the SCF (SKP1-CUL1-F-box) E3 ubiquitin-protein ligase complex SCF(FBXL7) composed of CUL1, SKP1, RBX1 and FBXL7. Interacts with AURKA; interaction takes place during mitosis but not in interphase. Interacts with BIRC5; this interaction allows BIRC5 to be polyubiquitinated by the SCF(FBXL7) E3 ubiquitin-protein ligase complex.

The protein resides in the cytoplasm. The protein localises to the cytoskeleton. It localises to the microtubule organizing center. It is found in the centrosome. It participates in protein modification; protein ubiquitination. Substrate recognition component of a SCF (SKP1-CUL1-F-box protein) E3 ubiquitin-protein ligase complex. During mitosis, it mediates the ubiquitination and subsequent proteasomal degradation of AURKA, causing mitotic arrest. It also regulates mitochondrial function by mediating the ubiquitination and proteasomal degradation of the apoptosis inhibitor BIRC5. The chain is F-box/LRR-repeat protein 7 (FBXL7) from Homo sapiens (Human).